A 391-amino-acid polypeptide reads, in one-letter code: Carbamoyl phosphate synthase small chain (391 aa).

Residues 1–202 are CPSase; the sequence is MTQPAILVLE…AHASAGSGEE (202 aa). Residues S47, G254, and G256 each contribute to the L-glutamine site. The Glutamine amidotransferase type-1 domain occupies 206-391; that stretch reads KVVAYDYGVK…RFVDLMAARA (186 aa). C282 (nucleophile) is an active-site residue. The L-glutamine site is built by L283, Q286, N324, G326, and F327. Residues H366 and E368 contribute to the active site.

Belongs to the CarA family. In terms of assembly, composed of two chains; the small (or glutamine) chain promotes the hydrolysis of glutamine to ammonia, which is used by the large (or ammonia) chain to synthesize carbamoyl phosphate. Tetramer of heterodimers (alpha,beta)4.

The catalysed reaction is hydrogencarbonate + L-glutamine + 2 ATP + H2O = carbamoyl phosphate + L-glutamate + 2 ADP + phosphate + 2 H(+). It catalyses the reaction L-glutamine + H2O = L-glutamate + NH4(+). It participates in amino-acid biosynthesis; L-arginine biosynthesis; carbamoyl phosphate from bicarbonate: step 1/1. It functions in the pathway pyrimidine metabolism; UMP biosynthesis via de novo pathway; (S)-dihydroorotate from bicarbonate: step 1/3. In terms of biological role, small subunit of the glutamine-dependent carbamoyl phosphate synthetase (CPSase). CPSase catalyzes the formation of carbamoyl phosphate from the ammonia moiety of glutamine, carbonate, and phosphate donated by ATP, constituting the first step of 2 biosynthetic pathways, one leading to arginine and/or urea and the other to pyrimidine nucleotides. The small subunit (glutamine amidotransferase) binds and cleaves glutamine to supply the large subunit with the substrate ammonia. The sequence is that of Carbamoyl phosphate synthase small chain from Xanthomonas axonopodis pv. citri (strain 306).